We begin with the raw amino-acid sequence, 568 residues long: General O-oligosaccharyltransferase (568 aa).

The next 12 helical transmembrane spans lie at 17-37 (VAVMRFLLLLLTAVLISLAWL), 46-66 (LTFASEMLSFAAFLSLLALFL), 78-98 (LALPVVFIPMIQWGFGLVVDF), 101-121 (ALLSSAYLLGFWLTMLLGYNL), 132-152 (FTLSSYLLFAVALLTSLIACI), 176-196 (FAQPNNMSTFLILGLLGCLYL), 214-234 (IVFAITLSQSRTAWVFGLFFI), 251-271 (YAVLLWAIGFFAVGLLFPRFT), 349-369 (LLVWNGWLLGGLITICILIWI), 376-396 (AKTTESIIACLMVSAVWIHTL), 397-417 (LEYPLQYAYFLLPVGFLMGLI), and 429-449 (VPVSVIRSIWVIGIMLLALIW).

It belongs to the PglL O-oligosaccharyltransferase family.

Its subcellular location is the cell membrane. In terms of biological role, catalyzes the O-glycosylation of multiple protein targets. Is responsible for general protein glycosylation within A.baylyi ADP1. Does not act as an O-antigen ligase. This chain is General O-oligosaccharyltransferase, found in Acinetobacter baylyi (strain ATCC 33305 / BD413 / ADP1).